We begin with the raw amino-acid sequence, 325 residues long: Large ribosomal subunit protein uL1m (325 aa).

The N-terminal 50 residues, 1-50 (MAAAVRCMGRALIHHQRHSLSKMVYQTSLCSCSVNIRVPNRHFAAATKSA), are a transit peptide targeting the mitochondrion.

This sequence belongs to the universal ribosomal protein uL1 family. Component of the mitochondrial large ribosomal subunit (mt-LSU). Mature mammalian 55S mitochondrial ribosomes consist of a small (28S) and a large (39S) subunit. The 28S small subunit contains a 12S ribosomal RNA (12S mt-rRNA) and 30 different proteins. The 39S large subunit contains a 16S rRNA (16S mt-rRNA), a copy of mitochondrial valine transfer RNA (mt-tRNA(Val)), which plays an integral structural role, and 52 different proteins.

The protein localises to the mitochondrion. This is Large ribosomal subunit protein uL1m (MRPL1) from Homo sapiens (Human).